We begin with the raw amino-acid sequence, 356 residues long: UDP-N-acetylglucosamine--N-acetylmuramyl-(pentapeptide) pyrophosphoryl-undecaprenol N-acetylglucosamine transferase (356 aa).

UDP-N-acetyl-alpha-D-glucosamine is bound by residues 14–16 (TGG), Asn126, Arg162, Ser190, Ile244, and Gln289.

Belongs to the glycosyltransferase 28 family. MurG subfamily.

It localises to the cell inner membrane. The catalysed reaction is di-trans,octa-cis-undecaprenyl diphospho-N-acetyl-alpha-D-muramoyl-L-alanyl-D-glutamyl-meso-2,6-diaminopimeloyl-D-alanyl-D-alanine + UDP-N-acetyl-alpha-D-glucosamine = di-trans,octa-cis-undecaprenyl diphospho-[N-acetyl-alpha-D-glucosaminyl-(1-&gt;4)]-N-acetyl-alpha-D-muramoyl-L-alanyl-D-glutamyl-meso-2,6-diaminopimeloyl-D-alanyl-D-alanine + UDP + H(+). It functions in the pathway cell wall biogenesis; peptidoglycan biosynthesis. Cell wall formation. Catalyzes the transfer of a GlcNAc subunit on undecaprenyl-pyrophosphoryl-MurNAc-pentapeptide (lipid intermediate I) to form undecaprenyl-pyrophosphoryl-MurNAc-(pentapeptide)GlcNAc (lipid intermediate II). The chain is UDP-N-acetylglucosamine--N-acetylmuramyl-(pentapeptide) pyrophosphoryl-undecaprenol N-acetylglucosamine transferase from Cupriavidus pinatubonensis (strain JMP 134 / LMG 1197) (Cupriavidus necator (strain JMP 134)).